The primary structure comprises 837 residues: Periplasmic nitrate reductase (837 aa).

Positions 1 to 32 form a signal peptide, tat-type signal; sequence MTSPKLDRRQMLKLEAAAIAAAAAGLPVPALA. Residues 44–100 form the 4Fe-4S Mo/W bis-MGD-type domain; sequence LKWDKAACRFCGTGCSVMVATKENRVVATHGDIKAEVNRGLNCVKGYFLSKIMYGHD. [4Fe-4S] cluster contacts are provided by Cys-51, Cys-54, Cys-58, and Cys-86. Mo-bis(molybdopterin guanine dinucleotide) is bound by residues Lys-88, Gln-155, Asn-180, Cys-184, 217-224, 248-252, 267-269, Met-378, Gln-382, Asn-488, 514-515, Lys-537, Asp-564, and 724-733; these read WGSNMAEM, STFEH, QTD, SD, and TGRVLEHWHS. Substrate is bound at residue Trp-800. Mo-bis(molybdopterin guanine dinucleotide) contacts are provided by Asn-808 and Lys-825.

This sequence belongs to the prokaryotic molybdopterin-containing oxidoreductase family. NasA/NapA/NarB subfamily. In terms of assembly, component of the periplasmic nitrate reductase NapAB complex composed of NapA and NapB. Requires [4Fe-4S] cluster as cofactor. Mo-bis(molybdopterin guanine dinucleotide) is required as a cofactor. In terms of processing, predicted to be exported by the Tat system. The position of the signal peptide cleavage has not been experimentally proven.

It localises to the periplasm. It catalyses the reaction 2 Fe(II)-[cytochrome] + nitrate + 2 H(+) = 2 Fe(III)-[cytochrome] + nitrite + H2O. Catalytic subunit of the periplasmic nitrate reductase complex NapAB. Receives electrons from NapB and catalyzes the reduction of nitrate to nitrite. The protein is Periplasmic nitrate reductase of Bradyrhizobium diazoefficiens (strain JCM 10833 / BCRC 13528 / IAM 13628 / NBRC 14792 / USDA 110).